The primary structure comprises 167 residues: General odorant-binding protein 1 (167 aa).

A signal peptide spans 1–22; it reads MAHTLQTVVLLLGTSILHPILA. 3 disulfide bridges follow: cysteine 41/cysteine 76, cysteine 72/cysteine 130, and cysteine 119/cysteine 139.

Belongs to the PBP/GOBP family. Antenna.

Its function is as follows. Present in the aqueous fluid surrounding olfactory sensory dendrites and are thought to aid in the capture and transport of hydrophobic odorants into and through this fluid. The sequence is that of General odorant-binding protein 1 from Antheraea pernyi (Chinese oak silk moth).